The chain runs to 311 residues: tRNA dimethylallyltransferase (311 aa).

Position 13–20 (13–20 (GPTASGKT)) interacts with ATP. 15 to 20 (TASGKT) serves as a coordination point for substrate. 2 interaction with substrate tRNA regions span residues 38–41 (DSMQ) and 166–170 (QRGLR).

It belongs to the IPP transferase family. Monomer. It depends on Mg(2+) as a cofactor.

It catalyses the reaction adenosine(37) in tRNA + dimethylallyl diphosphate = N(6)-dimethylallyladenosine(37) in tRNA + diphosphate. Functionally, catalyzes the transfer of a dimethylallyl group onto the adenine at position 37 in tRNAs that read codons beginning with uridine, leading to the formation of N6-(dimethylallyl)adenosine (i(6)A). The polypeptide is tRNA dimethylallyltransferase (Staphylococcus aureus (strain MSSA476)).